The chain runs to 268 residues: Tryptophan synthase alpha chain (268 aa).

Catalysis depends on proton acceptor residues glutamate 49 and aspartate 60.

Belongs to the TrpA family. As to quaternary structure, tetramer of two alpha and two beta chains.

It catalyses the reaction (1S,2R)-1-C-(indol-3-yl)glycerol 3-phosphate + L-serine = D-glyceraldehyde 3-phosphate + L-tryptophan + H2O. It functions in the pathway amino-acid biosynthesis; L-tryptophan biosynthesis; L-tryptophan from chorismate: step 5/5. Its function is as follows. The alpha subunit is responsible for the aldol cleavage of indoleglycerol phosphate to indole and glyceraldehyde 3-phosphate. The chain is Tryptophan synthase alpha chain from Pseudomonas aeruginosa (strain LESB58).